The primary structure comprises 564 residues: Multidrug resistance protein 1 (564 aa).

The Cytoplasmic segment spans residues 1-115 (MHYRFLRDSF…NPQNWPTLQK (115 aa)). The segment at 60-101 (IDNQGEPNSSQSSSSNNTIVDNNNNNDNDVDGDKIVVTWDGD) is disordered. Residues 67–86 (NSSQSSSSNNTIVDNNNNND) show a composition bias toward low complexity. Residues 116 to 136 (AFFIFQISFLTTSVYMGSAVY) form a helical membrane-spanning segment. Topologically, residues 137–151 (TPGIEELMHDFGIGR) are extracellular. A helical membrane pass occupies residues 152-172 (VVATLPLTLFVIGYGVGPLVF). Residues 173–183 (SPMSENAIFGR) lie on the Cytoplasmic side of the membrane. A helical transmembrane segment spans residues 184-204 (TSIYIITLFLFVILQIPTALV). The Extracellular segment spans residues 205-206 (NN). The chain crosses the membrane as a helical span at residues 207 to 227 (IAGLCILRFLGGFFASPCLAT). Residues 228-242 (GGASVADVVKFWNLP) lie on the Cytoplasmic side of the membrane. A helical membrane pass occupies residues 243–263 (VGLAAWSLGAVCGPSFGPFFG). The Extracellular segment spans residues 264 to 273 (SILTVKASWR). A helical membrane pass occupies residues 274-294 (WTFWFMCIISGFSFVMLCFTL). At 295 to 350 (PETFGKTLLYRKAKRLRAITGNDRITSEGEVENSKMTSHELIIDTLWRPLEITVME) the chain is on the cytoplasmic side. Residues 351-371 (PVVLLINIYIAMVYSILYLFF) traverse the membrane as a helical segment. The Extracellular segment spans residues 372 to 390 (EVFPIYFVGVKHFTLVELG). A helical transmembrane segment spans residues 391–411 (TTYMSIVIGIVIAAFIYIPVI). Residues 412 to 428 (RQKFTKPILRQEQVFPE) are Cytoplasmic-facing. Residues 429–449 (VFIPIAIVGGILLTSGLFIFG) traverse the membrane as a helical segment. The Extracellular portion of the chain corresponds to 450–455 (WSANRT). Asn-453 carries an N-linked (GlcNAc...) asparagine glycan. The helical transmembrane segment at 456–476 (THWVGPLFGAATTASGAFLIF) threads the bilayer. The Cytoplasmic segment spans residues 477-503 (QTLFNFMGASFKPHYIASVFASNDLFR). The helical transmembrane segment at 504–524 (SVIASVFPLFGAPLFDNLATP) threads the bilayer. The Extracellular segment spans residues 525-528 (EYPV). Residues 529–549 (AWGSSVLGFITLVMIAIPVLF) traverse the membrane as a helical segment. The Cytoplasmic portion of the chain corresponds to 550–564 (YLNGPKLRARSKYAN).

This sequence belongs to the major facilitator superfamily. CAR1 family.

The protein localises to the cell membrane. Plasma membrane multidrug efflux pump that confers resistance to numerous chemicals including azoles such as fluconazole, voriconazole, and benztriazoles, as well as to benomyl, cycloheximide, methotrexate, 4-nitroquinoline-N-oxide, sulfometuron methyl, cerulenin, and brefeldin A. The sequence is that of Multidrug resistance protein 1 from Candida albicans (strain SC5314 / ATCC MYA-2876) (Yeast).